The chain runs to 506 residues: Maturase K (506 aa).

It belongs to the intron maturase 2 family. MatK subfamily.

It is found in the plastid. The protein resides in the chloroplast. Functionally, usually encoded in the trnK tRNA gene intron. Probably assists in splicing its own and other chloroplast group II introns. The chain is Maturase K from Trifolium willdenovii (Tomcat clover).